We begin with the raw amino-acid sequence, 424 residues long: Kynureninase (424 aa).

Pyridoxal 5'-phosphate is bound by residues leucine 109, threonine 110, 137–140 (FPSD), aspartate 222, histidine 225, and tyrosine 247. Lysine 248 is modified (N6-(pyridoxal phosphate)lysine). 2 residues coordinate pyridoxal 5'-phosphate: tryptophan 278 and asparagine 306.

Belongs to the kynureninase family. In terms of assembly, homodimer. Pyridoxal 5'-phosphate serves as cofactor.

It catalyses the reaction L-kynurenine + H2O = anthranilate + L-alanine + H(+). It carries out the reaction 3-hydroxy-L-kynurenine + H2O = 3-hydroxyanthranilate + L-alanine + H(+). The protein operates within amino-acid degradation; L-kynurenine degradation; L-alanine and anthranilate from L-kynurenine: step 1/1. It functions in the pathway cofactor biosynthesis; NAD(+) biosynthesis; quinolinate from L-kynurenine: step 2/3. Its function is as follows. Catalyzes the cleavage of L-kynurenine (L-Kyn) and L-3-hydroxykynurenine (L-3OHKyn) into anthranilic acid (AA) and 3-hydroxyanthranilic acid (3-OHAA), respectively. The protein is Kynureninase of Koribacter versatilis (strain Ellin345).